The following is a 719-amino-acid chain: Pesticidal crystal protein Cry1Id (719 aa).

The protein belongs to the delta endotoxin family.

Promotes colloidosmotic lysis by binding to the midgut epithelial cells of many lepidopteran larvae. Active on Plutella xylostella and on Bombyx mori. In Bacillus thuringiensis, this protein is Pesticidal crystal protein Cry1Id (cry1Id).